A 63-amino-acid chain; its full sequence is Small ribosomal subunit protein eS17 (63 aa).

This sequence belongs to the eukaryotic ribosomal protein eS17 family.

This is Small ribosomal subunit protein eS17 from Methanosphaerula palustris (strain ATCC BAA-1556 / DSM 19958 / E1-9c).